A 377-amino-acid chain; its full sequence is Succinyl-diaminopimelate desuccinylase (377 aa).

Zn(2+) is bound at residue His-66. The active site involves Asp-68. Residue Asp-99 participates in Zn(2+) binding. Glu-133 functions as the Proton acceptor in the catalytic mechanism. Zn(2+)-binding residues include Glu-134, Glu-162, and His-348.

Belongs to the peptidase M20A family. DapE subfamily. Homodimer. The cofactor is Zn(2+). It depends on Co(2+) as a cofactor.

The catalysed reaction is N-succinyl-(2S,6S)-2,6-diaminopimelate + H2O = (2S,6S)-2,6-diaminopimelate + succinate. It functions in the pathway amino-acid biosynthesis; L-lysine biosynthesis via DAP pathway; LL-2,6-diaminopimelate from (S)-tetrahydrodipicolinate (succinylase route): step 3/3. Catalyzes the hydrolysis of N-succinyl-L,L-diaminopimelic acid (SDAP), forming succinate and LL-2,6-diaminopimelate (DAP), an intermediate involved in the bacterial biosynthesis of lysine and meso-diaminopimelic acid, an essential component of bacterial cell walls. This Xylella fastidiosa (strain M12) protein is Succinyl-diaminopimelate desuccinylase.